A 308-amino-acid chain; its full sequence is N-acetylmuramic acid 6-phosphate etherase (308 aa).

The SIS domain maps to 62–225 (ITDAFKVGGR…TTASMIRLGK (164 aa)). Catalysis depends on Glu90, which acts as the Proton donor. Glu121 is a catalytic residue.

The protein belongs to the GCKR-like family. MurNAc-6-P etherase subfamily. As to quaternary structure, homodimer.

It carries out the reaction N-acetyl-D-muramate 6-phosphate + H2O = N-acetyl-D-glucosamine 6-phosphate + (R)-lactate. It functions in the pathway amino-sugar metabolism; 1,6-anhydro-N-acetylmuramate degradation. It participates in amino-sugar metabolism; N-acetylmuramate degradation. Its pathway is cell wall biogenesis; peptidoglycan recycling. In terms of biological role, specifically catalyzes the cleavage of the D-lactyl ether substituent of MurNAc 6-phosphate, producing GlcNAc 6-phosphate and D-lactate. Together with AnmK, is also required for the utilization of anhydro-N-acetylmuramic acid (anhMurNAc) either imported from the medium or derived from its own cell wall murein, and thus plays a role in cell wall recycling. This chain is N-acetylmuramic acid 6-phosphate etherase, found in Vibrio campbellii (strain ATCC BAA-1116).